Reading from the N-terminus, the 353-residue chain is Immune-associated nucleotide-binding protein 8 (353 aa).

Over residues 1–10 (MANDQKNSES) the composition is skewed to polar residues. The tract at residues 1–43 (MANDQKNSESFPAKEDHKKDDAAAPAEVDHKDEFSASQPHPVE) is disordered. Positions 12–34 (PAKEDHKKDDAAAPAEVDHKDEF) are enriched in basic and acidic residues. Positions 40–248 (HPVENIVLVG…YTDEMYHMIK (209 aa)) constitute an AIG1-type G domain. Residues 49-56 (GRTGNGKS) are G1. Residues 49-57 (GRTGNGKSA) and S70 each bind GTP. Residues 76-80 (GVTME) form a G2 region. The tract at residues 98–101 (DTPG) is G3. A G4 region spans residues 168–171 (TGGD). Residues 207–209 (DNK) are G5. N208 serves as a coordination point for GTP. Positions 244 to 291 (YHMIKEENERHKKEQEELESKGHSEEQLAALMKELQIMNERNLKAMAE) form a coiled coil.

The protein belongs to the TRAFAC class TrmE-Era-EngA-EngB-Septin-like GTPase superfamily. AIG1/Toc34/Toc159-like paraseptin GTPase family. IAN subfamily. Mainly expressed in leaves.

This is Immune-associated nucleotide-binding protein 8 from Arabidopsis thaliana (Mouse-ear cress).